The sequence spans 158 residues: Transcription elongation factor GreA (158 aa).

Belongs to the GreA/GreB family.

Functionally, necessary for efficient RNA polymerase transcription elongation past template-encoded arresting sites. The arresting sites in DNA have the property of trapping a certain fraction of elongating RNA polymerases that pass through, resulting in locked ternary complexes. Cleavage of the nascent transcript by cleavage factors such as GreA or GreB allows the resumption of elongation from the new 3'terminus. GreA releases sequences of 2 to 3 nucleotides. The polypeptide is Transcription elongation factor GreA (Salmonella typhi).